Here is a 77-residue protein sequence, read N- to C-terminus: Large ribosomal subunit protein uL29 (77 aa).

Belongs to the universal ribosomal protein uL29 family.

The protein is Large ribosomal subunit protein uL29 of Mycobacterium avium (strain 104).